The chain runs to 406 residues: GTPase Obg (406 aa).

An Obg domain is found at 1-159 (MKFVDEVSIF…RDLKLELKVL (159 aa)). Residues 126-149 (GNTRFKSSTNRAPRQTTPGKPGES) are disordered. Polar residues predominate over residues 129 to 143 (RFKSSTNRAPRQTTP). The OBG-type G domain maps to 160-333 (ADVGLLGLPN…ICRDIMHYLE (174 aa)). Residues 166–173 (GLPNAGKS), 191–195 (FTTLV), 213–216 (DIPG), 283–286 (NKMD), and 314–316 (SAI) each bind GTP. Mg(2+) contacts are provided by serine 173 and threonine 193. The segment at 376 to 406 (SGVRSVDDIDEDDDFFDDEDDDGPEIIYVRD) is disordered. Acidic residues predominate over residues 383 to 399 (DIDEDDDFFDDEDDDGP).

This sequence belongs to the TRAFAC class OBG-HflX-like GTPase superfamily. OBG GTPase family. In terms of assembly, monomer. It depends on Mg(2+) as a cofactor.

The protein localises to the cytoplasm. Functionally, an essential GTPase which binds GTP, GDP and possibly (p)ppGpp with moderate affinity, with high nucleotide exchange rates and a fairly low GTP hydrolysis rate. Plays a role in control of the cell cycle, stress response, ribosome biogenesis and in those bacteria that undergo differentiation, in morphogenesis control. This chain is GTPase Obg, found in Ectopseudomonas mendocina (strain ymp) (Pseudomonas mendocina).